An 831-amino-acid polypeptide reads, in one-letter code: Protein translocase subunit SecA (831 aa).

Residues Q88, 106–110 (GEGKT), and D495 contribute to the ATP site. Zn(2+) contacts are provided by C816, C818, C827, and C828.

It belongs to the SecA family. In terms of assembly, monomer and homodimer. Part of the essential Sec protein translocation apparatus which comprises SecA, SecYEG and auxiliary proteins SecDF-YajC and YidC. It depends on Zn(2+) as a cofactor.

Its subcellular location is the cell membrane. The protein localises to the cytoplasm. The enzyme catalyses ATP + H2O + cellular proteinSide 1 = ADP + phosphate + cellular proteinSide 2.. Its function is as follows. Part of the Sec protein translocase complex. Interacts with the SecYEG preprotein conducting channel. Has a central role in coupling the hydrolysis of ATP to the transfer of proteins into and across the cell membrane, serving as an ATP-driven molecular motor driving the stepwise translocation of polypeptide chains across the membrane. In Lawsonia intracellularis (strain PHE/MN1-00), this protein is Protein translocase subunit SecA.